The primary structure comprises 313 residues: Olfactory receptor 1G1 (313 aa).

Over 1 to 25 (MEGKNLTSISEFFLLGFSEQLEEQK) the chain is Extracellular. Asparagine 5 carries an N-linked (GlcNAc...) asparagine glycan. Residues 26 to 49 (ALFGSFLFMYLVTVAGNLLIILVI) form a helical membrane-spanning segment. Topologically, residues 50–57 (ITDTQLHT) are cytoplasmic. Residues 58 to 79 (PMYFFLANLSLADACFVSTTVP) traverse the membrane as a helical segment. Residues 80 to 100 (KMLANIQIQSQAISYSGCLLQ) are Extracellular-facing. Cysteines 97 and 189 form a disulfide. A helical membrane pass occupies residues 101-120 (LYFFMLFVMLEAFLLAVMAY). At 121-140 (DRYVAICHPLHYILIMSPGL) the chain is on the cytoplasmic side. A helical transmembrane segment spans residues 141–158 (CVFLVSASWIMNALHSLL). Topologically, residues 159 to 196 (HTLLMNSLSFCANHEIPHFFCDIDPLLSLSCTDPFTNE) are extracellular. The chain crosses the membrane as a helical span at residues 197-219 (LVIFITGGLTGLVCVLCLIISYT). The Cytoplasmic portion of the chain corresponds to 220 to 236 (NIFSTILKIPSAQGKRK). Residues 237–259 (AFSTCGSHLSVVSLFFGTSFCVY) traverse the membrane as a helical segment. Topologically, residues 260–272 (FIPPSTRSAQKDT) are extracellular. Residues 273–292 (VASVMYTVVTPMLNPFIYSL) form a helical membrane-spanning segment. Topologically, residues 293-313 (RNQEIKSSLRKLIWVREIHSP) are cytoplasmic.

This sequence belongs to the G-protein coupled receptor 1 family.

Its subcellular location is the cell membrane. Odorant receptor. The sequence is that of Olfactory receptor 1G1 (OR1G1) from Gorilla gorilla gorilla (Western lowland gorilla).